Reading from the N-terminus, the 702-residue chain is MADS-box MEF2 type transcription factor MIG1 (702 aa).

Residues 1 to 61 form the MADS-box domain; sequence MGRRKIEIKA…KKLYEYSSGD (61 aa). 2 disordered regions span residues 73–608 and 658–702; these read GGAT…NIDT and PSFL…KVDS. A compositionally biased stretch (acidic residues) spans 86–96; that stretch reads GGDDDDEEEGD. Over residues 132–144 the composition is skewed to pro residues; that stretch reads ASPPIPNGVPFPP. A compositionally biased stretch (low complexity) spans 145 to 155; sequence HGHGVPRGHTP. A compositionally biased stretch (polar residues) spans 180–195; it reads GSPQVNGFGFGQQQSM. The segment covering 201-241 has biased composition (pro residues); the sequence is TTMPPHMPPQMAPGPPFPYPQHPQHPPHPPHPPHPPHPQQP. 3 stretches are compositionally biased toward low complexity: residues 273–284, 326–343, and 350–371; these read PMGMQRHSVSPP, ESPQ…QQPE, and EQQQ…QSEP. Positions 456-465 are enriched in polar residues; the sequence is VDESTSNASE. Low complexity-rich tracts occupy residues 487-512 and 530-553; these read RASI…SLRA and DGSG…DATS. The segment covering 554–567 has biased composition (polar residues); that stretch reads QSTRQNDSHSSTNM. Residues 587 to 600 show a composition bias toward pro residues; the sequence is PPNPFAPKRPPQHP. The segment covering 693-702 has biased composition (basic and acidic residues); it reads NEPKRVKVDS.

Belongs to the MEF2 family. Interacts with MAPK MPS1.

The protein localises to the nucleus. In terms of biological role, transcription factor acting downstream of the MPS1 MAP kinase (MAPK) cascade during conidiation and plant infection. Required for overcoming plant defense responses and the differentiation of secondary infectious hyphae in live plant cells. The polypeptide is MADS-box MEF2 type transcription factor MIG1 (Pyricularia oryzae (strain 70-15 / ATCC MYA-4617 / FGSC 8958) (Rice blast fungus)).